Consider the following 65-residue polypeptide: Large ribosomal subunit protein uL29 (65 aa).

This sequence belongs to the universal ribosomal protein uL29 family.

The sequence is that of Large ribosomal subunit protein uL29 from Buchnera aphidicola subsp. Acyrthosiphon pisum (strain 5A).